We begin with the raw amino-acid sequence, 211 residues long: AETAPAAPADSVPASVEKPPAKKRGKKPVGLTGTSRKAPSASVSKLITEALSVSQERAGMSLAALKKALAAAGYDVEKNNSRIKLGLKSLVGKGILVQTRGTGASGSFKLSKKAAPEPRKGKVKKPAAAKTKKLVLSRDSKSPKSAKANKRAKKSRTTAAQKAARSGRKTKEAKVKQQRKSPAKARAAKPKAGNPKLTQQKTNPRKATNRK.

Alanine 1 is subject to N-acetylalanine. A compositionally biased stretch (low complexity) spans 1–16; sequence AETAPAAPADSVPASV. The segment at 1–42 is disordered; it reads AETAPAAPADSVPASVEKPPAKKRGKKPVGLTGTSRKAPSAS. Positions 32-42 are enriched in polar residues; it reads TGTSRKAPSAS. The region spanning 39-112 is the H15 domain; the sequence is PSASVSKLIT…GASGSFKLSK (74 aa). Citrulline is present on arginine 57. The segment at 101 to 211 is disordered; sequence GTGASGSFKL…TNPRKATNRK (111 aa). Positions 121 to 135 are enriched in basic residues; sequence GKVKKPAAAKTKKLV. Serine 142 carries the post-translational modification Phosphoserine. Positions 147–156 are enriched in basic residues; it reads KANKRAKKSR. Phosphothreonine is present on threonine 158. A phosphoserine mark is found at serine 166 and serine 181. Residues 176–189 show a composition bias toward basic residues; the sequence is KQQRKSPAKARAAK.

It belongs to the histone H1/H5 family. In terms of processing, phosphorylated in early spermatids. Citrullination at Arg-57 (H1R54ci) by PADI4 takes place within the DNA-binding site of H1 and results in its displacement from chromatin and global chromatin decondensation, thereby promoting pluripotency and stem cell maintenance. As to expression, testis-specific.

The protein resides in the nucleus. It localises to the chromosome. Its function is as follows. Testis-specific histone H1 that forms less compacted chromatin compared to other H1 histone subtypes. Formation of more relaxed chromatin may be required to promote chromatin architecture required for proper chromosome regulation during meiosis, such as homologous recombination. Histones H1 act as linkers that bind to nucleosomes and compact polynucleosomes into a higher-order chromatin configuration. The protein is Histone H1t of Sus scrofa (Pig).